The sequence spans 466 residues: Citrate synthase, mitochondrial (466 aa).

A mitochondrion-targeting transit peptide spans 1–27 (MALLTAAARLLGAKNSSCLVLAARHAS). The SIFI-degron motif lies at 2-21 (ALLTAAARLLGAKNSSCLVL). Lysine 57 is modified (N6-succinyllysine). N6-acetyllysine; alternate is present on lysine 76. Position 76 is an N6-succinyllysine; alternate (lysine 76). N6-succinyllysine occurs at positions 103 and 193. Serine 226 bears the Phosphoserine mark. Residue histidine 301 is part of the active site. 2 positions are modified to N6-acetyllysine; alternate: lysine 321 and lysine 327. An N6-succinyllysine; alternate mark is found at lysine 321 and lysine 327. The active site involves histidine 347. Arginine 356 provides a ligand contact to oxaloacetate. The residue at position 375 (lysine 375) is an N6-acetyllysine; alternate. Lysine 375 bears the N6-succinyllysine; alternate mark. Residue lysine 382 is modified to N6-acetyllysine. N6-acetyllysine; alternate is present on lysine 393. Lysine 393 is modified (N6-succinyllysine; alternate). Lysine 395 is subject to N6,N6,N6-trimethyllysine. Aspartate 402 is a catalytic residue. The oxaloacetate site is built by arginine 428 and arginine 448. An N6-succinyllysine modification is found at lysine 450. Lysine 459 bears the N6-acetyllysine; alternate mark. N6-succinyllysine; alternate is present on lysine 459.

The protein belongs to the citrate synthase family. As to quaternary structure, homodimer. In terms of processing, methylated. Trimethylation at Lys-395 by CSKMT decreases citrate synthase activity. Post-translationally, in response to mitochondrial stress, the precursor protein is ubiquitinated by the SIFI complex in the cytoplasm before mitochondrial import, leading to its degradation. Within the SIFI complex, UBR4 initiates ubiquitin chain that are further elongated or branched by KCMF1. As to expression, expressed in the head region and flagellum of epididymal sperm.

Its subcellular location is the mitochondrion matrix. It carries out the reaction oxaloacetate + acetyl-CoA + H2O = citrate + CoA + H(+). It participates in carbohydrate metabolism; tricarboxylic acid cycle; isocitrate from oxaloacetate: step 1/2. Functionally, key enzyme of the Krebs tricarboxylic acid cycle which catalyzes the synthesis of citrate from acetyl coenzyme A and oxaloacetate. This is Citrate synthase, mitochondrial (Cs) from Rattus norvegicus (Rat).